Consider the following 364-residue polypeptide: Esculetin O-methyltransferase (364 aa).

A bergaptol-binding site is contributed by asparagine 132. Positions 209, 232, 252, 253, 265, and 266 each coordinate S-adenosyl-L-homocysteine. Histidine 270 serves as a coordination point for bergaptol. The active-site Proton acceptor is histidine 270.

Belongs to the class I-like SAM-binding methyltransferase superfamily. Cation-independent O-methyltransferase family. COMT subfamily. As to quaternary structure, homodimer. Expressed ubiquitously.

It carries out the reaction bergaptol + S-adenosyl-L-methionine = bergapten + S-adenosyl-L-homocysteine. It catalyses the reaction xanthotoxol + S-adenosyl-L-methionine = xanthotoxin + S-adenosyl-L-homocysteine + H(+). The catalysed reaction is esculetin + S-adenosyl-L-methionine = isoscopoletin + S-adenosyl-L-homocysteine + H(+). The enzyme catalyses esculetin + S-adenosyl-L-methionine = scopoletin + S-adenosyl-L-homocysteine + H(+). It participates in aromatic compound metabolism. Its pathway is secondary metabolite biosynthesis. With respect to regulation, inhibited by zinc Zn(2+), copper Cu(2+) and silver Ag(+) ions. O-methyltransferase involved in the biosynthesis of methoxylated coumarins natural products such as isoscopoletin, scopoletin, xanthotoxin and bergapten, photosensitizers used for medical purpose such as treating psoriasis and vitiligo or facilitating resistance to microbial infection and other stresses. Catalyzes the methylation of esculetin, bergaptol and xanthotoxol, but seems inactive on scopoletin and isoscopoletin. The sequence is that of Esculetin O-methyltransferase from Kitagawia praeruptora (Peucedanum praeruptorum).